The following is a 336-amino-acid chain: Holliday junction branch migration complex subunit RuvB (336 aa).

The segment at 4 to 184 (ADRLISAGTT…FGIVQRLEFY (181 aa)) is large ATPase domain (RuvB-L). ATP contacts are provided by residues isoleucine 23, arginine 24, glycine 65, lysine 68, threonine 69, threonine 70, 131-133 (EDY), arginine 174, tyrosine 184, and arginine 221. Threonine 69 is a Mg(2+) binding site. Positions 185–255 (QVPDLQYIVS…IAAQALDMLN (71 aa)) are small ATPAse domain (RuvB-S). The interval 258–336 (AEGFDYMDRK…HFGITPPEMP (79 aa)) is head domain (RuvB-H). Residues arginine 294, arginine 313, and arginine 318 each contribute to the DNA site.

Belongs to the RuvB family. As to quaternary structure, homohexamer. Forms an RuvA(8)-RuvB(12)-Holliday junction (HJ) complex. HJ DNA is sandwiched between 2 RuvA tetramers; dsDNA enters through RuvA and exits via RuvB. An RuvB hexamer assembles on each DNA strand where it exits the tetramer. Each RuvB hexamer is contacted by two RuvA subunits (via domain III) on 2 adjacent RuvB subunits; this complex drives branch migration. In the full resolvosome a probable DNA-RuvA(4)-RuvB(12)-RuvC(2) complex forms which resolves the HJ.

It localises to the cytoplasm. It catalyses the reaction ATP + H2O = ADP + phosphate + H(+). Its function is as follows. The RuvA-RuvB-RuvC complex processes Holliday junction (HJ) DNA during genetic recombination and DNA repair, while the RuvA-RuvB complex plays an important role in the rescue of blocked DNA replication forks via replication fork reversal (RFR). RuvA specifically binds to HJ cruciform DNA, conferring on it an open structure. The RuvB hexamer acts as an ATP-dependent pump, pulling dsDNA into and through the RuvAB complex. RuvB forms 2 homohexamers on either side of HJ DNA bound by 1 or 2 RuvA tetramers; 4 subunits per hexamer contact DNA at a time. Coordinated motions by a converter formed by DNA-disengaged RuvB subunits stimulates ATP hydrolysis and nucleotide exchange. Immobilization of the converter enables RuvB to convert the ATP-contained energy into a lever motion, pulling 2 nucleotides of DNA out of the RuvA tetramer per ATP hydrolyzed, thus driving DNA branch migration. The RuvB motors rotate together with the DNA substrate, which together with the progressing nucleotide cycle form the mechanistic basis for DNA recombination by continuous HJ branch migration. Branch migration allows RuvC to scan DNA until it finds its consensus sequence, where it cleaves and resolves cruciform DNA. This is Holliday junction branch migration complex subunit RuvB from Shigella flexneri serotype 5b (strain 8401).